Consider the following 81-residue polypeptide: ATP synthase subunit c (81 aa).

2 helical membrane-spanning segments follow: residues 6-26 and 57-77; these read AAAS…GPGI and LAFM…LLFA.

It belongs to the ATPase C chain family. F-type ATPases have 2 components, F(1) - the catalytic core - and F(0) - the membrane proton channel. F(1) has five subunits: alpha(3), beta(3), gamma(1), delta(1), epsilon(1). F(0) has four main subunits: a(1), b(1), b'(1) and c(10-14). The alpha and beta chains form an alternating ring which encloses part of the gamma chain. F(1) is attached to F(0) by a central stalk formed by the gamma and epsilon chains, while a peripheral stalk is formed by the delta, b and b' chains.

It is found in the cellular thylakoid membrane. In terms of biological role, f(1)F(0) ATP synthase produces ATP from ADP in the presence of a proton or sodium gradient. F-type ATPases consist of two structural domains, F(1) containing the extramembraneous catalytic core and F(0) containing the membrane proton channel, linked together by a central stalk and a peripheral stalk. During catalysis, ATP synthesis in the catalytic domain of F(1) is coupled via a rotary mechanism of the central stalk subunits to proton translocation. Key component of the F(0) channel; it plays a direct role in translocation across the membrane. A homomeric c-ring of between 10-14 subunits forms the central stalk rotor element with the F(1) delta and epsilon subunits. The polypeptide is ATP synthase subunit c (Synechocystis sp. (strain ATCC 27184 / PCC 6803 / Kazusa)).